Here is a 116-residue protein sequence, read N- to C-terminus: Large ribosomal subunit protein bL19 (116 aa).

This sequence belongs to the bacterial ribosomal protein bL19 family.

Functionally, this protein is located at the 30S-50S ribosomal subunit interface and may play a role in the structure and function of the aminoacyl-tRNA binding site. The sequence is that of Large ribosomal subunit protein bL19 from Staphylococcus carnosus (strain TM300).